The sequence spans 349 residues: Estrogen receptor (349 aa).

Positions 1-5 (YEVGM) form a DNA-binding region, nuclear receptor. The tract at residues 1–38 (YEVGMMKGGIRKDRRGGRMLKHKRQREENDSRNAGALT) is disordered. Positions 12 to 24 (KDRRGGRMLKHKR) are enriched in basic residues. The 237-residue stretch at 65–301 (TADQMVSALL…DLLLEMLDAH (237 aa)) folds into the NR LBD domain. The segment at 306-327 (PAAKGSPPSEDDPLNQLAVPSP) is disordered.

Belongs to the nuclear hormone receptor family. NR3 subfamily. As to quaternary structure, binds DNA as a homodimer. Can form a heterodimer with ER-beta.

It is found in the nucleus. The steroid hormones and their receptors are involved in the regulation of eukaryotic gene expression and affect cellular proliferation and differentiation in target tissues. The sequence is that of Estrogen receptor (ESR1) from Anolis carolinensis (Green anole).